Here is a 343-residue protein sequence, read N- to C-terminus: KRR1 small subunit processome component homolog (343 aa).

The region spanning D126–N194 is the KH domain. Residues K230–K246 are compositionally biased toward basic residues. Residues K230–S343 form a disordered region. 2 stretches are compositionally biased toward basic and acidic residues: residues L272–D303 and R318–K331. Residues L272–N341 adopt a coiled-coil conformation. Residues K333–S343 show a composition bias toward basic residues.

It belongs to the KRR1 family. As to quaternary structure, monomer. Component of the ribosomal small subunit (SSU) processome.

The protein resides in the nucleus. It localises to the nucleolus. Required for 40S ribosome biogenesis. Involved in nucleolar processing of pre-18S ribosomal RNA and ribosome assembly. Binds to RNA. Required for female germline development, cell viability during eye development and for survival of dividing cells and epithelial cells during early wing disk development. The protein is KRR1 small subunit processome component homolog of Drosophila virilis (Fruit fly).